The primary structure comprises 293 residues: 4-hydroxy-tetrahydrodipicolinate synthase (293 aa).

Thr-45 is a binding site for pyruvate. Tyr-133 serves as the catalytic Proton donor/acceptor. The active-site Schiff-base intermediate with substrate is Lys-161. Position 204 (Ile-204) interacts with pyruvate.

This sequence belongs to the DapA family. As to quaternary structure, homotetramer; dimer of dimers.

Its subcellular location is the cytoplasm. It catalyses the reaction L-aspartate 4-semialdehyde + pyruvate = (2S,4S)-4-hydroxy-2,3,4,5-tetrahydrodipicolinate + H2O + H(+). The protein operates within amino-acid biosynthesis; L-lysine biosynthesis via DAP pathway; (S)-tetrahydrodipicolinate from L-aspartate: step 3/4. Catalyzes the condensation of (S)-aspartate-beta-semialdehyde [(S)-ASA] and pyruvate to 4-hydroxy-tetrahydrodipicolinate (HTPA). The protein is 4-hydroxy-tetrahydrodipicolinate synthase of Yersinia pseudotuberculosis serotype I (strain IP32953).